We begin with the raw amino-acid sequence, 355 residues long: Guanine nucleotide-binding protein subunit alpha-14 (355 aa).

Residues 34–355 (RELKLLLLGT…QLNLREFNLV (322 aa)) enclose the G-alpha domain. The interval 37 to 50 (KLLLLGTGESGKST) is G1 motif. Residues 42 to 49 (GTGESGKS), 176 to 182 (LRVRVPT), 201 to 205 (DVGGQ), 270 to 273 (NKKD), and Ala-327 contribute to the GTP site. The Mg(2+) site is built by Ser-49 and Thr-182. The G2 motif stretch occupies residues 174–182 (DVLRVRVPT). The segment at 197 to 206 (FRMVDVGGQR) is G3 motif. The segment at 266 to 273 (ILFLNKKD) is G4 motif. Positions 325 to 330 (TCATDT) are G5 motif.

It belongs to the G-alpha family. G(q) subfamily. In terms of assembly, g proteins are composed of 3 units; alpha, beta and gamma. The alpha chain contains the guanine nucleotide binding site.

Guanine nucleotide-binding proteins (G proteins) are involved as modulators or transducers in various transmembrane signaling systems. This chain is Guanine nucleotide-binding protein subunit alpha-14 (GNA14), found in Bos taurus (Bovine).